The following is a 732-amino-acid chain: Subtilisin-like protease SBT4.13 (732 aa).

An N-terminal signal peptide occupies residues 1–24 (MATLAASSSLLSCLLVLFLSSVSA). The propeptide at 25–109 (VTDDKQVYIV…VFPNKKLQLQ (85 aa)) is activation peptide. The 78-residue stretch at 31–108 (VYIVYMGSLS…SVFPNKKLQL (78 aa)) folds into the Inhibitor I9 domain. One can recognise a Peptidase S8 domain in the interval 113–579 (SWDFMGLKEG…SGHVDPIAAS (467 aa)). Asp141 acts as the Charge relay system in catalysis. Asn172 is a glycosylation site (N-linked (GlcNAc...) asparagine). His196 (charge relay system) is an active-site residue. Residue Asn219 is glycosylated (N-linked (GlcNAc...) asparagine). Positions 352-436 (DYPLVYGKSA…GLLTEDFESL (85 aa)) constitute a PA domain. An N-linked (GlcNAc...) asparagine glycan is attached at Asn458. Ser518 serves as the catalytic Charge relay system. Residues Asn555, Asn600, Asn648, and Asn658 are each glycosylated (N-linked (GlcNAc...) asparagine).

It belongs to the peptidase S8 family. In terms of processing, the C-terminal propeptide is autocleaved.

It is found in the secreted. The polypeptide is Subtilisin-like protease SBT4.13 (Arabidopsis thaliana (Mouse-ear cress)).